The sequence spans 494 residues: UPF0371 protein SSA_0208 (494 aa).

It belongs to the UPF0371 family.

The chain is UPF0371 protein SSA_0208 from Streptococcus sanguinis (strain SK36).